The following is a 528-amino-acid chain: Peptide chain release factor 3 (528 aa).

Residues 10 to 278 enclose the tr-type G domain; sequence DRRRTFGIIS…AFVQMAPPPH (269 aa). GTP-binding positions include 19 to 26, 87 to 91, and 141 to 144; these read SHPDAGKT, DTPGH, and NKLD.

It belongs to the TRAFAC class translation factor GTPase superfamily. Classic translation factor GTPase family. PrfC subfamily.

The protein resides in the cytoplasm. Its function is as follows. Increases the formation of ribosomal termination complexes and stimulates activities of RF-1 and RF-2. It binds guanine nucleotides and has strong preference for UGA stop codons. It may interact directly with the ribosome. The stimulation of RF-1 and RF-2 is significantly reduced by GTP and GDP, but not by GMP. The chain is Peptide chain release factor 3 from Syntrophobacter fumaroxidans (strain DSM 10017 / MPOB).